The following is a 211-amino-acid chain: dITP/XTP pyrophosphatase (211 aa).

Residue 13–18 coordinates substrate; sequence THNPGK. D45 and D74 together coordinate Mg(2+). The active-site Proton acceptor is D74. Substrate is bound by residues S75, 160-163, K183, and 195-196; these read FGYD and HR.

The protein belongs to the HAM1 NTPase family. As to quaternary structure, homodimer. It depends on Mg(2+) as a cofactor.

It carries out the reaction XTP + H2O = XMP + diphosphate + H(+). It catalyses the reaction dITP + H2O = dIMP + diphosphate + H(+). The enzyme catalyses ITP + H2O = IMP + diphosphate + H(+). In terms of biological role, pyrophosphatase that catalyzes the hydrolysis of nucleoside triphosphates to their monophosphate derivatives, with a high preference for the non-canonical purine nucleotides XTP (xanthosine triphosphate), dITP (deoxyinosine triphosphate) and ITP. Seems to function as a house-cleaning enzyme that removes non-canonical purine nucleotides from the nucleotide pool, thus preventing their incorporation into DNA/RNA and avoiding chromosomal lesions. This Bradyrhizobium diazoefficiens (strain JCM 10833 / BCRC 13528 / IAM 13628 / NBRC 14792 / USDA 110) protein is dITP/XTP pyrophosphatase.